The following is a 70-amino-acid chain: ATP synthase subunit c (70 aa).

2 consecutive transmembrane segments (helical) span residues 1 to 21 and 47 to 67; these read MNFL…SYGN and FIGV…SFLI.

This sequence belongs to the ATPase C chain family. In terms of assembly, F-type ATPases have 2 components, F(1) - the catalytic core - and F(0) - the membrane proton channel. F(1) has five subunits: alpha(3), beta(3), gamma(1), delta(1), epsilon(1). F(0) has three main subunits: a(1), b(2) and c(10-14). The alpha and beta chains form an alternating ring which encloses part of the gamma chain. F(1) is attached to F(0) by a central stalk formed by the gamma and epsilon chains, while a peripheral stalk is formed by the delta and b chains.

Its subcellular location is the cell membrane. F(1)F(0) ATP synthase produces ATP from ADP in the presence of a proton or sodium gradient. F-type ATPases consist of two structural domains, F(1) containing the extramembraneous catalytic core and F(0) containing the membrane proton channel, linked together by a central stalk and a peripheral stalk. During catalysis, ATP synthesis in the catalytic domain of F(1) is coupled via a rotary mechanism of the central stalk subunits to proton translocation. Its function is as follows. Key component of the F(0) channel; it plays a direct role in translocation across the membrane. A homomeric c-ring of between 10-14 subunits forms the central stalk rotor element with the F(1) delta and epsilon subunits. The sequence is that of ATP synthase subunit c from Latilactobacillus sakei subsp. sakei (strain 23K) (Lactobacillus sakei subsp. sakei).